Consider the following 417-residue polypeptide: Hydrogen cyanide synthase subunit HcnC (417 aa).

An N-terminal signal peptide occupies residues 1-18 (MNRTYDIVIAGGGVIGAS). Residue 7-21 (IVIAGGGVIGASCAY) coordinates FAD. C19 carries N-palmitoyl cysteine lipidation. Residue C19 is the site of S-diacylglycerol cysteine attachment. Residues 46 to 66 (SAGGLWAIGESVGLGCGVIFF) traverse the membrane as a helical segment.

Belongs to the FAD-dependent glycerol-3-phosphate dehydrogenase family. In terms of assembly, heterotrimer of HcnA, HcnB and HcnC. FAD is required as a cofactor.

The protein localises to the cell membrane. It catalyses the reaction glycine + 2 A = hydrogen cyanide + 2 AH2 + CO2. Oxygen is necessary for cyanogenesis. Activated by succinate, glycine methyl ester, glucose and D,L-methionine in addition to glycine. Phenazine methosulfate, methylene blue, 2,6-dichlorophenolindophenol (DCIP) and ferricyanide can replace oxygen for the reaction. Inhibited by pyrrolnitrin and acriflavine at 1 mM concentration. Functionally, a three-component membrane-bound flavoenzyme that catalyzes the formation of hydrogen cyanide, a secondary metabolite, by transfer of electrons to a cyanide-resistant branch of the aerobic respiratory chain. In Pseudomonas aeruginosa (strain ATCC 15692 / DSM 22644 / CIP 104116 / JCM 14847 / LMG 12228 / 1C / PRS 101 / PAO1), this protein is Hydrogen cyanide synthase subunit HcnC.